We begin with the raw amino-acid sequence, 437 residues long: Phosphomethylpyrimidine synthase (437 aa).

Residues N69, M98, Y127, H163, 185-187 (SRG), 226-229 (DACR), and E265 each bind substrate. Position 269 (H269) interacts with Zn(2+). Y292 is a binding site for substrate. Residue H333 coordinates Zn(2+). The [4Fe-4S] cluster site is built by C409, C412, and C416.

Belongs to the ThiC family. Requires [4Fe-4S] cluster as cofactor.

It catalyses the reaction 5-amino-1-(5-phospho-beta-D-ribosyl)imidazole + S-adenosyl-L-methionine = 4-amino-2-methyl-5-(phosphooxymethyl)pyrimidine + CO + 5'-deoxyadenosine + formate + L-methionine + 3 H(+). It functions in the pathway cofactor biosynthesis; thiamine diphosphate biosynthesis. Catalyzes the synthesis of the hydroxymethylpyrimidine phosphate (HMP-P) moiety of thiamine from aminoimidazole ribotide (AIR) in a radical S-adenosyl-L-methionine (SAM)-dependent reaction. The protein is Phosphomethylpyrimidine synthase of Clostridium kluyveri (strain NBRC 12016).